Here is a 379-residue protein sequence, read N- to C-terminus: Homoserine O-succinyltransferase (379 aa).

Residues 51-360 enclose the AB hydrolase-1 domain; the sequence is NAVLICHALS…DAPQGHDAFL (310 aa). S157 functions as the Nucleophile in the catalytic mechanism. R227 provides a ligand contact to substrate. Residues D323 and H356 contribute to the active site. D357 contacts substrate.

This sequence belongs to the AB hydrolase superfamily. MetX family. Homodimer.

Its subcellular location is the cytoplasm. It carries out the reaction L-homoserine + succinyl-CoA = O-succinyl-L-homoserine + CoA. The protein operates within amino-acid biosynthesis; L-methionine biosynthesis via de novo pathway; O-succinyl-L-homoserine from L-homoserine: step 1/1. Functionally, transfers a succinyl group from succinyl-CoA to L-homoserine, forming succinyl-L-homoserine. This chain is Homoserine O-succinyltransferase, found in Pseudomonas aeruginosa (strain UCBPP-PA14).